Here is a 310-residue protein sequence, read N- to C-terminus: Solute carrier family 25 member 47 (310 aa).

3 Solcar repeats span residues 1–80 (MDFV…CLAH), 93–208 (PTKA…LSEW), and 217–304 (PDVL…VLRL). 6 helical membrane-spanning segments follow: residues 3–23 (FVAG…LDTV), 49–69 (LWGF…VSSV), 98–116 (ITLS…TSPT), 192–212 (GHSF…LTPA), 219–239 (VLGV…VATP), and 275–295 (VLFK…MVVF).

This sequence belongs to the mitochondrial carrier (TC 2.A.29) family.

It is found in the mitochondrion inner membrane. The protein resides in the mitochondrion outer membrane. The enzyme catalyses NAD(+)(in) = NAD(+)(out). It carries out the reaction acetyl-CoA(in) = acetyl-CoA(out). Functionally, mitochondrial NAD(+) transporter that acts as a 'metabolic gate' in hepatic lipogenesis. Provides NAD(+) substrate to mitochondrial SIRT3 deacetylase and enables its NAD(+)-dependent activities in mitochondrial energy metabolism. This triggers downstream activation of PRKAA1/AMPK-alpha signaling cascade that negatively regulates sterol regulatory element-binding protein (SREBP) transcriptional activities and ATP-consuming lipogenesis to restore cellular energy balance. May transport other mitochondrial metabolites having an aromatic nucleotide and phosphate groups, such as acetyl-CoA. Does not transport amino acids. The transport mechanism remains to be elucidated. This is Solute carrier family 25 member 47 from Rattus norvegicus (Rat).